The chain runs to 188 residues: Peptide deformylase (188 aa).

Fe cation contacts are provided by Cys107 and His149. Glu150 is a catalytic residue. Position 153 (His153) interacts with Fe cation.

This sequence belongs to the polypeptide deformylase family. It depends on Fe(2+) as a cofactor.

The enzyme catalyses N-terminal N-formyl-L-methionyl-[peptide] + H2O = N-terminal L-methionyl-[peptide] + formate. In terms of biological role, removes the formyl group from the N-terminal Met of newly synthesized proteins. Requires at least a dipeptide for an efficient rate of reaction. N-terminal L-methionine is a prerequisite for activity but the enzyme has broad specificity at other positions. The chain is Peptide deformylase from Thermosynechococcus vestitus (strain NIES-2133 / IAM M-273 / BP-1).